A 360-amino-acid polypeptide reads, in one-letter code: Isocitrate dehydrogenase [NAD] subunit 1, mitochondrial (360 aa).

The N-terminal 11 residues, 1-11, are a transit peptide targeting the mitochondrion; that stretch reads MLNRTIAKRTL. Arg-109, Arg-140, and Asp-228 together coordinate substrate. Asp-228 provides a ligand contact to Mg(2+).

This sequence belongs to the isocitrate and isopropylmalate dehydrogenases family. As to quaternary structure, octamer of two non-identical subunits IDH1 and IDH2. Requires Mg(2+) as cofactor. It depends on Mn(2+) as a cofactor.

The protein localises to the mitochondrion. It carries out the reaction D-threo-isocitrate + NAD(+) = 2-oxoglutarate + CO2 + NADH. With respect to regulation, allosterically regulated by several compounds including AMP, NAD(+), and citrate. Functionally, performs an essential role in the oxidative function of the citric acid cycle. Also binds RNA; specifically to the 5'-untranslated leaders of mitochondrial mRNAs. The sequence is that of Isocitrate dehydrogenase [NAD] subunit 1, mitochondrial (IDH1) from Saccharomyces cerevisiae (strain ATCC 204508 / S288c) (Baker's yeast).